Reading from the N-terminus, the 302-residue chain is Mediator of RNA polymerase II transcription subunit 6 (302 aa).

The disordered stretch occupies residues 260–281 (ATGQTGATSRFENGSSRSSTDA).

This sequence belongs to the Mediator complex subunit 6 family. Component of the Mediator complex.

The protein localises to the nucleus. Its function is as follows. Component of the Mediator complex, a coactivator involved in the regulated transcription of nearly all RNA polymerase II-dependent genes. Mediator functions as a bridge to convey information from gene-specific regulatory proteins to the basal RNA polymerase II transcription machinery. Mediator is recruited to promoters by direct interactions with regulatory proteins and serves as a scaffold for the assembly of a functional preinitiation complex with RNA polymerase II and the general transcription factors. This chain is Mediator of RNA polymerase II transcription subunit 6 (MED6), found in Candida glabrata (strain ATCC 2001 / BCRC 20586 / JCM 3761 / NBRC 0622 / NRRL Y-65 / CBS 138) (Yeast).